The chain runs to 490 residues: N-succinylglutamate 5-semialdehyde dehydrogenase (490 aa).

Residue 224–229 (GSSPTG) coordinates NAD(+). Catalysis depends on residues glutamate 247 and cysteine 281.

Belongs to the aldehyde dehydrogenase family. AstD subfamily.

The catalysed reaction is N-succinyl-L-glutamate 5-semialdehyde + NAD(+) + H2O = N-succinyl-L-glutamate + NADH + 2 H(+). The protein operates within amino-acid degradation; L-arginine degradation via AST pathway; L-glutamate and succinate from L-arginine: step 4/5. In terms of biological role, catalyzes the NAD-dependent reduction of succinylglutamate semialdehyde into succinylglutamate. The protein is N-succinylglutamate 5-semialdehyde dehydrogenase of Hahella chejuensis (strain KCTC 2396).